A 136-amino-acid chain; its full sequence is Small ribosomal subunit protein uS9 (136 aa).

A compositionally biased stretch (basic and acidic residues) spans 103-116 (PLKTEGHLSRDPRA). The interval 103–136 (PLKTEGHLSRDPRAKERRKYGLKKARKAPQFSKR) is disordered. The segment covering 117–136 (KERRKYGLKKARKAPQFSKR) has biased composition (basic residues).

This sequence belongs to the universal ribosomal protein uS9 family.

This Prochlorococcus marinus (strain SARG / CCMP1375 / SS120) protein is Small ribosomal subunit protein uS9 (rpsI).